A 120-amino-acid chain; its full sequence is MKQTRTAARQSRHQRIRRKVKGTSDRPRLAVFRSHQHIYAQVIDDTRHHTLVAASSLEPELRQKLGKGSTCAASIAVGRLIAERAKAAGIERVVFDRGGNIYHGRVKALADAAREGGLDF.

A disordered region spans residues 1–25 (MKQTRTAARQSRHQRIRRKVKGTSD). A compositionally biased stretch (basic residues) spans 10-21 (QSRHQRIRRKVK).

The protein belongs to the universal ribosomal protein uL18 family. In terms of assembly, part of the 50S ribosomal subunit; part of the 5S rRNA/L5/L18/L25 subcomplex. Contacts the 5S and 23S rRNAs.

Its function is as follows. This is one of the proteins that bind and probably mediate the attachment of the 5S RNA into the large ribosomal subunit, where it forms part of the central protuberance. The sequence is that of Large ribosomal subunit protein uL18 from Thermosynechococcus vestitus (strain NIES-2133 / IAM M-273 / BP-1).